We begin with the raw amino-acid sequence, 332 residues long: D-xylose-binding periplasmic protein (332 aa).

The signal sequence occupies residues 1 to 23 (MKIKSALLTLVGALTVFSSSAHS).

It belongs to the bacterial solute-binding protein 2 family.

The protein resides in the periplasm. Involved in the high-affinity D-xylose membrane transport system. Binds with high affinity to xylose. The protein is D-xylose-binding periplasmic protein (xylF) of Haemophilus influenzae (strain ATCC 51907 / DSM 11121 / KW20 / Rd).